Consider the following 386-residue polypeptide: L-lactate oxidase (386 aa).

The 367-residue stretch at 16–382 (AQAPFPICFA…RTITLVKNDG (367 aa)) folds into the FMN hydroxy acid dehydrogenase domain. Tyrosine 42 lines the pyruvate pocket. FMN contacts are provided by residues 95–97 (PVG), serine 124, and glutamine 146. Tyrosine 148 contacts pyruvate. An FMN-binding site is contributed by threonine 174. Arginine 183 contributes to the pyruvate binding site. 2 residues coordinate FMN: lysine 253 and serine 275. Residues histidine 277 and arginine 280 each coordinate pyruvate. Histidine 277 acts as the Proton acceptor in catalysis. Residues 308–312 (DSGVY) and arginine 332 contribute to the FMN site.

Belongs to the FMN-dependent alpha-hydroxy acid dehydrogenase family. As to quaternary structure, homotetramer. FMN is required as a cofactor.

It catalyses the reaction a (2S)-2-hydroxycarboxylate + O2 = a 2-oxocarboxylate + H2O2. The catalysed reaction is (S)-lactate + O2 = pyruvate + H2O2. The enzyme catalyses 2-hydroxyoctanoate + O2 = 2-oxooctanoate + H2O2. It carries out the reaction mandelate + O2 = phenylglyoxylate + H2O2. It catalyses the reaction 2-hydroxyoctadecanoate + O2 = 2-oxooctadecanoate + H2O2. The catalysed reaction is (S)-2-hydroxyglutarate + O2 = H2O2 + 2-oxoglutarate. Its function is as follows. Oxidase that catalyzes the oxidation of a broad range of 2-hydroxyacids in vitro, such as (S)-lactate, 2-hydroxyoctanoate, mandelate, 2-hydroxyoctadecanoate and (S)-2-hydroxyglutarate, to the corresponding 2-oxoacids, with a reduction of O2 to H2O2. May be involved in the utilization of L-lactate as an energy source for growth. This is L-lactate oxidase from Lysinibacillus sphaericus (strain C3-41).